The following is a 450-amino-acid chain: MKATKTTYKKDPMGLTPSQIVNELNRFIVGQEKAKKAVAIALRNRCRRKRVEGNLRNEIVPKNILMIGSTGVGKTEIARRLAKLTNSPFYKIEATKFTEVGYVGRDVESIIRDLVEIAVNTKKTLAKMEVDINAREKAIERILDSLVGKTSSSETREKFKEKILNGKLDDTEIEISVADTTPVGGGSFEIPGMPGASMGVLNLGDMIGRALGSSKTKTKKMLVKDAMAIIIPEESEKLIDQEKIIQQAINLAENDGIVFIDEIDKIASTGSSGAKNAEISREGVQRDLLPLIEGTTVNTKYGPVKTDHILFIASGAFHIAKPSDLLPELQGRLPIRVELNSLTKDDMIKILLEPETSLVKQYSALIGTEDVHLEFAASAIEKIADYAITVNLEVEDIGARRLHTILENLLEDISFEASEMKGKKITIDDKFVENQLSKIITNLDLAKFVL.

ATP contacts are provided by residues valine 29, 71-76, aspartate 261, glutamate 328, and arginine 400; that span reads GVGKTE.

It belongs to the ClpX chaperone family. HslU subfamily. In terms of assembly, a double ring-shaped homohexamer of HslV is capped on each side by a ring-shaped HslU homohexamer. The assembly of the HslU/HslV complex is dependent on binding of ATP.

The protein localises to the cytoplasm. Its function is as follows. ATPase subunit of a proteasome-like degradation complex; this subunit has chaperone activity. The binding of ATP and its subsequent hydrolysis by HslU are essential for unfolding of protein substrates subsequently hydrolyzed by HslV. HslU recognizes the N-terminal part of its protein substrates and unfolds these before they are guided to HslV for hydrolysis. The polypeptide is ATP-dependent protease ATPase subunit HslU (Rickettsia felis (strain ATCC VR-1525 / URRWXCal2) (Rickettsia azadi)).